The following is a 73-amino-acid chain: Putative beta-defensin 108A (73 aa).

The first 22 residues, 1-22 (MRIAVLFFTIFFFMSQVLPAKG), serve as a signal peptide directing secretion. 3 disulfides stabilise this stretch: C28-C55, C35-C49, and C39-C56.

Belongs to the beta-defensin family.

Its subcellular location is the secreted. Functionally, has antibacterial activity. In Homo sapiens (Human), this protein is Putative beta-defensin 108A.